Reading from the N-terminus, the 238-residue chain is Isoprene-epoxide--glutathione S-transferase (238 aa).

Positions 7 to 82 constitute a GST N-terminal domain; that stretch reads YVPAWGIPDI…YLKNKFGDKL (76 aa). In terms of domain architecture, GST C-terminal spans 118 to 238; that stretch reads DAGWETYIPF…LERIRKQYDI (121 aa).

Belongs to the GST superfamily. Homodimer.

It catalyses the reaction 2-glutathionyl-2-methylbut-3-en-1-ol = (3R)-3,4-epoxy-3-methylbut-1-ene + glutathione. Its activity is regulated as follows. Activity is inhibited by 1,2-epoxyhexane. Involved in isoprene degradation. Catalyzes the glutathione-dependent ring opening of various epoxides. The highest conversion rate is observed with the physiological substrate, 3,4-epoxy-3-methyl-1-butene, which is the primary oxidation product of isoprene. It can also use other epoxides, including epoxyethane, epoxypropane, epithiopropane, epichlorohydrin, epifluorohydrin, epibromohydrin, 1,2-epoxybutane, 1,2-epoxyhexane, cis-2,3-epoxybutane, cis-1,2-dichloroepoxyethane and trans-1,2-dichloroepoxyethane. The chain is Isoprene-epoxide--glutathione S-transferase from Rhodococcus sp. (strain AD45).